The sequence spans 276 residues: Pirin-like protein CC_0481 (276 aa).

The protein belongs to the pirin family.

This chain is Pirin-like protein CC_0481, found in Caulobacter vibrioides (strain ATCC 19089 / CIP 103742 / CB 15) (Caulobacter crescentus).